Here is a 283-residue protein sequence, read N- to C-terminus: MLRVAVPNKGTLSEPAAEILSEAGYRRRTDTKDLTVVDPANNVEFFFLRPKDIAIYVGSGQLDLGITGRDLAAESDAPVRERLALGFGSSTFRYAAPAGRDWAPEDLAGRRIATAFPNLVRKDLAGRGIEATVIRLDGAVEISVALGVADAIADVVGSGRTLGLHNLVAFGDSLCDSEAVLIERDGAGDENAAARDQLTARVQGVVFGQQYLMLDYDCPRHVLDRATEVTPGLESPTIAPLADQDWVAVRALVPRRDVNSIMDELAAIGAKAILASDIRFCRF.

Belongs to the ATP phosphoribosyltransferase family. Long subfamily. In terms of assembly, equilibrium between an active dimeric form, an inactive hexameric form and higher aggregates. Interconversion between the various forms is largely reversible and is influenced by the natural substrates and inhibitors of the enzyme. The cofactor is Mg(2+).

The protein resides in the cytoplasm. The enzyme catalyses 1-(5-phospho-beta-D-ribosyl)-ATP + diphosphate = 5-phospho-alpha-D-ribose 1-diphosphate + ATP. The protein operates within amino-acid biosynthesis; L-histidine biosynthesis; L-histidine from 5-phospho-alpha-D-ribose 1-diphosphate: step 1/9. With respect to regulation, feedback inhibited by histidine. Its function is as follows. Catalyzes the condensation of ATP and 5-phosphoribose 1-diphosphate to form N'-(5'-phosphoribosyl)-ATP (PR-ATP). Has a crucial role in the pathway because the rate of histidine biosynthesis seems to be controlled primarily by regulation of HisG enzymatic activity. This is ATP phosphoribosyltransferase from Mycobacterium sp. (strain JLS).